A 357-amino-acid chain; its full sequence is S-adenosylmethionine:tRNA ribosyltransferase-isomerase (357 aa).

It belongs to the QueA family. In terms of assembly, monomer.

The protein localises to the cytoplasm. It catalyses the reaction 7-aminomethyl-7-carbaguanosine(34) in tRNA + S-adenosyl-L-methionine = epoxyqueuosine(34) in tRNA + adenine + L-methionine + 2 H(+). It participates in tRNA modification; tRNA-queuosine biosynthesis. Its function is as follows. Transfers and isomerizes the ribose moiety from AdoMet to the 7-aminomethyl group of 7-deazaguanine (preQ1-tRNA) to give epoxyqueuosine (oQ-tRNA). The sequence is that of S-adenosylmethionine:tRNA ribosyltransferase-isomerase from Phenylobacterium zucineum (strain HLK1).